The chain runs to 286 residues: 4-hydroxybenzoate octaprenyltransferase (286 aa).

7 helical membrane-spanning segments follow: residues 21-40 (GTLL…AGGM), 95-115 (ILFV…NGLV), 142-162 (FLGI…TGEV), 167-187 (WWLF…YAMV), 210-230 (QIIG…GWSA), 235-255 (LYGL…MLIF), and 266-286 (FLNN…DYLI).

This sequence belongs to the UbiA prenyltransferase family. Requires Mg(2+) as cofactor.

It localises to the cell inner membrane. It carries out the reaction all-trans-octaprenyl diphosphate + 4-hydroxybenzoate = 4-hydroxy-3-(all-trans-octaprenyl)benzoate + diphosphate. The protein operates within cofactor biosynthesis; ubiquinone biosynthesis. Functionally, catalyzes the prenylation of para-hydroxybenzoate (PHB) with an all-trans polyprenyl group. Mediates the second step in the final reaction sequence of ubiquinone-8 (UQ-8) biosynthesis, which is the condensation of the polyisoprenoid side chain with PHB, generating the first membrane-bound Q intermediate 3-octaprenyl-4-hydroxybenzoate. This chain is 4-hydroxybenzoate octaprenyltransferase, found in Shewanella baltica (strain OS185).